Reading from the N-terminus, the 216-residue chain is Cytochrome c biogenesis ATP-binding export protein CcmA (216 aa).

The region spanning 11–216 (VSASKLTCIR…RKIRLDYRFV (206 aa)) is the ABC transporter domain. Residue 43 to 50 (GPNGAGKT) participates in ATP binding.

Belongs to the ABC transporter superfamily. CcmA exporter (TC 3.A.1.107) family. As to quaternary structure, the complex is composed of two ATP-binding proteins (CcmA) and two transmembrane proteins (CcmB).

It is found in the cell inner membrane. The enzyme catalyses heme b(in) + ATP + H2O = heme b(out) + ADP + phosphate + H(+). Its function is as follows. Part of the ABC transporter complex CcmAB involved in the biogenesis of c-type cytochromes; once thought to export heme, this seems not to be the case, but its exact role is uncertain. Responsible for energy coupling to the transport system. This chain is Cytochrome c biogenesis ATP-binding export protein CcmA, found in Shewanella sp. (strain MR-7).